Here is a 317-residue protein sequence, read N- to C-terminus: Acetyl-coenzyme A carboxylase carboxyl transferase subunit alpha (317 aa).

Residues 37–291 (KLQEKVDKLL…GNAIEDALDD (255 aa)) form the CoA carboxyltransferase C-terminal domain.

It belongs to the AccA family. In terms of assembly, acetyl-CoA carboxylase is a heterohexamer composed of biotin carboxyl carrier protein (AccB), biotin carboxylase (AccC) and two subunits each of ACCase subunit alpha (AccA) and ACCase subunit beta (AccD).

It is found in the cytoplasm. The catalysed reaction is N(6)-carboxybiotinyl-L-lysyl-[protein] + acetyl-CoA = N(6)-biotinyl-L-lysyl-[protein] + malonyl-CoA. The protein operates within lipid metabolism; malonyl-CoA biosynthesis; malonyl-CoA from acetyl-CoA: step 1/1. Component of the acetyl coenzyme A carboxylase (ACC) complex. First, biotin carboxylase catalyzes the carboxylation of biotin on its carrier protein (BCCP) and then the CO(2) group is transferred by the carboxyltransferase to acetyl-CoA to form malonyl-CoA. This is Acetyl-coenzyme A carboxylase carboxyl transferase subunit alpha from Rhodospirillum centenum (strain ATCC 51521 / SW).